The sequence spans 158 residues: Regenerating islet-derived protein 4 (158 aa).

The N-terminal stretch at M1 to G22 is a signal peptide. C30 and C41 form a disulfide bridge. Residues H37–K155 form the C-type lectin domain. A glycan (N-linked (GlcNAc...) asparagine) is linked at N50. Disulfide bonds link C58–C154 and C129–C146. A carbohydrate contacts are provided by residues D98–Q103 and N135–N137.

Highly expressed in the gastrointestinal tract including the duodenum, jejunum, ileum, ileocecum, appendix, descending colon, pancreas and small intestine. Weakly expressed in normal colon and stomach. Strongly expressed in most colorectal tumors than in normal colon. Preferentially expressed in mucinous tumors and in some cases neuro-endocrine tumors. Expressed in mucus-secreting cells and enterocyte-like cells. In small intestine expressed at the basal perinuclear zone of goblet cells.

The protein localises to the secreted. Calcium-independent lectin displaying mannose-binding specificity and able to maintain carbohydrate recognition activity in an acidic environment. May be involved in inflammatory and metaplastic responses of the gastrointestinal epithelium. This chain is Regenerating islet-derived protein 4 (REG4), found in Homo sapiens (Human).